A 706-amino-acid polypeptide reads, in one-letter code: MAGVSFSGHRLELLAAYEEVIREESAADWALYTYEDGSDDLKLAASGEGGLQELSGHFENQKVMYGFCSVKDSQAALPKYVLINWVGEDVPDARKCACASHVAKVAEFFQGVDVIVNASSVEDIDAGAIGQRLSNGLARLSSPVLHRLRLREDENAEPVGTTYQKTDAAVEMKRINREQFWEQAKKEEELRKEEERKKALDARLRFEQERMEQERQEQEERERRYREREQQIEEHRRKQQSLEAEEAKRRLKEQSIFGDQRDEEEESQMKKSESEVEEAAAIIAQRPDNPREFFRQQERVASASGGSCDAPAPAPFNHRPGRPYCPFIKASDSGPSSSSSSSSSPPRTPFPYITCHRTPNLSSSLPCSHLDSHRRMAPTPIPTRSPSDSSTASTPIAEQIERALDEVTSSQPPPPPPPPPPTQEAQETTPSLDEELSKEAKVTAAPEVWAGCAAEPPQAQEPPLLQSSPLEDSMCTESPEQAALAAPAEPAASVTSVADVHAADTIETTTATTDTTIANNVTPAAASLIDLWPGNGEEASTLQAEPRVPTPPSGAEASLAEVPLLNEAAQEPLPPVGEGCANLLNFDELPEPPATFCDPEEEVGETLAASQVLTMPSALEEVDQVLEQELEPEPHLLTNGETTQKEGTQASEGYFSQSQEEEFAQSEEPCAKVPPPVFYNKPPEIDITCWDADPVPEEEEGFEGGD.

At Ala2 the chain carries N-acetylalanine. The 132-residue stretch at 3 to 134 folds into the ADF-H domain; sequence GVSFSGHRLE…DAGAIGQRLS (132 aa). 2 positions are modified to phosphoserine: Ser141 and Ser142. Residues 209-236 show a composition bias toward basic and acidic residues; it reads ERMEQERQEQEERERRYREREQQIEEHR. The interval 209-497 is disordered; the sequence is ERMEQERQEQ…AEPAASVTSV (289 aa). The residue at position 241 (Ser241) is a Phosphoserine. The segment covering 288–298 has biased composition (basic and acidic residues); it reads DNPREFFRQQE. A compositionally biased stretch (low complexity) spans 331–345; it reads SDSGPSSSSSSSSSP. Ser344 bears the Phosphoserine mark. A compositionally biased stretch (polar residues) spans 357–366; sequence RTPNLSSSLP. Phosphothreonine occurs at positions 379 and 383. A compositionally biased stretch (polar residues) spans 382–396; it reads PTRSPSDSSTASTPI. Ser385, Ser387, and Ser393 each carry phosphoserine. Thr394 is modified (phosphothreonine). A compositionally biased stretch (pro residues) spans 411 to 422; it reads QPPPPPPPPPPT. Residues 453–497 show a composition bias toward low complexity; sequence AAEPPQAQEPPLLQSSPLEDSMCTESPEQAALAAPAEPAASVTSV. Ser468 bears the Phosphoserine mark. Phosphothreonine is present on Thr550. The interval 633 to 677 is disordered; it reads EPHLLTNGETTQKEGTQASEGYFSQSQEEEFAQSEEPCAKVPPPV. The segment covering 639-651 has biased composition (polar residues); sequence NGETTQKEGTQAS. Ser658 is modified (phosphoserine).

Interacts with RUFY3. Interacts with CXCR4; this interaction is enhanced by antigenic stimulation. Interacts (via ADF-H domain) with ZMYND8 (via N-terminus); the interaction leads to sequestering of ZMYND8 in the cytoplasm. In terms of tissue distribution, expressed in the hippocampus, with expression in the pyramidal cells of CA1, CA2 and CA3 and in the granule cells of the dentate gyrus (at protein level). Highly expressed in brain, also present in stomach and to a lesser degree in kidney, colon, and urinary bladder. The E2 isoform is specifically expressed in adult stomach, kidney, and cultured cells.

The protein resides in the cytoplasm. The protein localises to the cell projection. It localises to the dendrite. It is found in the cell cortex. Its subcellular location is the cell junction. The protein resides in the growth cone. Actin cytoskeleton-organizing protein that plays a role in the formation of cell projections. Required for actin polymerization at immunological synapses (IS) and for the recruitment of the chemokine receptor CXCR4 to IS. Plays a role in dendritic spine morphogenesis and organization, including the localization of the dopamine receptor DRD1 to the dendritic spines. Involved in memory-related synaptic plasticity in the hippocampus. The polypeptide is Drebrin (Dbn1) (Mus musculus (Mouse)).